Here is a 397-residue protein sequence, read N- to C-terminus: Enoyl-[acyl-carrier-protein] reductase [NADH] (397 aa).

Residues 48–53 (GASTGY), 74–75 (FE), 111–112 (DA), and 139–140 (AA) each bind NAD(+). Tyr225 is a binding site for substrate. Catalysis depends on Tyr235, which acts as the Proton donor. NAD(+) contacts are provided by residues Lys244 and 273-275 (VVT).

The protein belongs to the TER reductase family. Monomer.

It catalyses the reaction a 2,3-saturated acyl-[ACP] + NAD(+) = a (2E)-enoyl-[ACP] + NADH + H(+). Its pathway is lipid metabolism; fatty acid biosynthesis. Functionally, involved in the final reduction of the elongation cycle of fatty acid synthesis (FAS II). Catalyzes the reduction of a carbon-carbon double bond in an enoyl moiety that is covalently linked to an acyl carrier protein (ACP). This is Enoyl-[acyl-carrier-protein] reductase [NADH] from Burkholderia pseudomallei (strain 1710b).